The primary structure comprises 126 residues: Small ribosomal subunit protein uS12 (126 aa).

D89 is subject to 3-methylthioaspartic acid. The segment at 99–126 (RGSLDTSGVNDRKQGRSKYGTKKPKDKK) is disordered. Basic residues predominate over residues 113–126 (GRSKYGTKKPKDKK).

The protein belongs to the universal ribosomal protein uS12 family. In terms of assembly, part of the 30S ribosomal subunit. Contacts proteins S8 and S17. May interact with IF1 in the 30S initiation complex.

With S4 and S5 plays an important role in translational accuracy. Its function is as follows. Interacts with and stabilizes bases of the 16S rRNA that are involved in tRNA selection in the A site and with the mRNA backbone. Located at the interface of the 30S and 50S subunits, it traverses the body of the 30S subunit contacting proteins on the other side and probably holding the rRNA structure together. The combined cluster of proteins S8, S12 and S17 appears to hold together the shoulder and platform of the 30S subunit. The chain is Small ribosomal subunit protein uS12 from Legionella pneumophila (strain Paris).